Reading from the N-terminus, the 330-residue chain is Methionyl-tRNA formyltransferase (330 aa).

Ser-112 to Pro-115 serves as a coordination point for (6S)-5,6,7,8-tetrahydrofolate.

It belongs to the Fmt family.

The enzyme catalyses L-methionyl-tRNA(fMet) + (6R)-10-formyltetrahydrofolate = N-formyl-L-methionyl-tRNA(fMet) + (6S)-5,6,7,8-tetrahydrofolate + H(+). Its function is as follows. Attaches a formyl group to the free amino group of methionyl-tRNA(fMet). The formyl group appears to play a dual role in the initiator identity of N-formylmethionyl-tRNA by promoting its recognition by IF2 and preventing the misappropriation of this tRNA by the elongation apparatus. The polypeptide is Methionyl-tRNA formyltransferase (Synechococcus sp. (strain RCC307)).